Reading from the N-terminus, the 143-residue chain is Transcriptional regulator MraZ (143 aa).

SpoVT-AbrB domains follow at residues 5–47 (EFDH…TLEE) and 76–119 (AVEV…DRET).

Belongs to the MraZ family. In terms of assembly, forms oligomers.

It localises to the cytoplasm. The protein resides in the nucleoid. In Staphylococcus epidermidis (strain ATCC 35984 / DSM 28319 / BCRC 17069 / CCUG 31568 / BM 3577 / RP62A), this protein is Transcriptional regulator MraZ.